The sequence spans 113 residues: ECORI-T site protein ETM (113 aa).

This is ECORI-T site protein ETM (ETM) from Autographa californica nuclear polyhedrosis virus (AcMNPV).